The chain runs to 521 residues: Probable cytochrome P450 12d1 proximal, mitochondrial (521 aa).

The transit peptide at Met1 to Ser19 directs the protein to the mitochondrion. Cys467 provides a ligand contact to heme.

It belongs to the cytochrome P450 family. The cofactor is heme.

It localises to the mitochondrion membrane. This chain is Probable cytochrome P450 12d1 proximal, mitochondrial (Cyp12d1-p), found in Drosophila melanogaster (Fruit fly).